Here is a 463-residue protein sequence, read N- to C-terminus: Chromosomal replication initiator protein DnaA (463 aa).

Positions 1–83 are domain I, interacts with DnaA modulators; it reads MSTNQIILTD…LQLFQHYNNT (83 aa). Residues 83–124 are domain II; it reads TIKSVEIITKELPGTSKTVIELPTKTFADIGSSELNAENIFS. A domain III, AAA+ region region spans residues 125–343; that stretch reads TLDVRFTFDN…GALNKVIAHS (219 aa). ATP is bound by residues G171, G173, K174, and T175. Residues 344-463 are domain IV, binds dsDNA; it reads NFTLKEITLE…INLLMKILQN (120 aa).

This sequence belongs to the DnaA family. As to quaternary structure, oligomerizes as a right-handed, spiral filament on DNA at oriC.

The protein resides in the cytoplasm. Functionally, plays an essential role in the initiation and regulation of chromosomal replication. ATP-DnaA binds to the origin of replication (oriC) to initiate formation of the DNA replication initiation complex once per cell cycle. Binds the DnaA box (a 9 base pair repeat at the origin) and separates the double-stranded (ds)DNA. Forms a right-handed helical filament on oriC DNA; dsDNA binds to the exterior of the filament while single-stranded (ss)DNA is stabiized in the filament's interior. The ATP-DnaA-oriC complex binds and stabilizes one strand of the AT-rich DNA unwinding element (DUE), permitting loading of DNA polymerase. After initiation quickly degrades to an ADP-DnaA complex that is not apt for DNA replication. Binds acidic phospholipids. This chain is Chromosomal replication initiator protein DnaA, found in Rickettsia canadensis (strain McKiel).